Reading from the N-terminus, the 258-residue chain is Methionine aminopeptidase (258 aa).

A substrate-binding site is contributed by H84. A divalent metal cation-binding residues include D102, D113, and H176. H183 is a binding site for substrate. E211 and E242 together coordinate a divalent metal cation.

This sequence belongs to the peptidase M24A family. Methionine aminopeptidase type 1 subfamily. As to quaternary structure, monomer. Requires Co(2+) as cofactor. Zn(2+) is required as a cofactor. The cofactor is Mn(2+). It depends on Fe(2+) as a cofactor.

The enzyme catalyses Release of N-terminal amino acids, preferentially methionine, from peptides and arylamides.. In terms of biological role, removes the N-terminal methionine from nascent proteins. The N-terminal methionine is often cleaved when the second residue in the primary sequence is small and uncharged (Met-Ala-, Cys, Gly, Pro, Ser, Thr, or Val). Requires deformylation of the N(alpha)-formylated initiator methionine before it can be hydrolyzed. This chain is Methionine aminopeptidase, found in Aquifex aeolicus (strain VF5).